The chain runs to 574 residues: Phosphatidylinositol 4-kinase gamma 3 (574 aa).

2 Ubiquitin-like domains span residues 32-109 (PILV…SDLQ) and 110-188 (AISV…AKVR). In terms of domain architecture, PI3K/PI4K catalytic spans 257–555 (GNGPIRSSDG…IVPTETTEDE (299 aa)). Residues 263 to 269 (SSDGSGG) form a G-loop region. ATP is bound by residues 264-270 (SDGSGGA), Lys-286, and 381-384 (QMFV). The segment at 414–422 (ANADRHAGN) is catalytic loop. Residues 438 to 464 (PIDHGYCFPNKFEDCTFEWLYWPQAKE) are activation loop. Asp-440 is an ATP binding site.

It belongs to the PI3/PI4-kinase family. Type II PI4K subfamily.

The catalysed reaction is a 1,2-diacyl-sn-glycero-3-phospho-(1D-myo-inositol) + ATP = a 1,2-diacyl-sn-glycero-3-phospho-(1D-myo-inositol 4-phosphate) + ADP + H(+). Its function is as follows. The phosphorylation of phosphatidylinositol (PI) to PI4P is the first committed step in the generation of phosphatidylinositol 4,5-bisphosphate (PIP2), a precursor of the second messenger inositol 1,4,5-trisphosphate (InsP3). The sequence is that of Phosphatidylinositol 4-kinase gamma 3 (PI4KG3) from Arabidopsis thaliana (Mouse-ear cress).